The sequence spans 54 residues: Small ribosomal subunit protein uS14 (54 aa).

Residues cysteine 19, cysteine 22, cysteine 37, and cysteine 40 each contribute to the Zn(2+) site.

The protein belongs to the universal ribosomal protein uS14 family. Zinc-binding uS14 subfamily. Part of the 30S ribosomal subunit. Zn(2+) is required as a cofactor.

Binds 16S rRNA, required for the assembly of 30S particles. The protein is Small ribosomal subunit protein uS14 of Saccharolobus solfataricus (strain ATCC 35092 / DSM 1617 / JCM 11322 / P2) (Sulfolobus solfataricus).